The sequence spans 683 residues: DNA ligase (683 aa).

Residues 42-46 (DAEYD), 91-92 (SL), and glutamate 122 contribute to the NAD(+) site. The active-site N6-AMP-lysine intermediate is lysine 124. Positions 145, 182, 299, and 323 each coordinate NAD(+). Zn(2+)-binding residues include cysteine 417, cysteine 420, cysteine 435, and cysteine 441. The region spanning 602 to 683 (APQGVLAGKT…MRKLLEGQTT (82 aa)) is the BRCT domain.

The protein belongs to the NAD-dependent DNA ligase family. LigA subfamily. Requires Mg(2+) as cofactor. It depends on Mn(2+) as a cofactor.

The catalysed reaction is NAD(+) + (deoxyribonucleotide)n-3'-hydroxyl + 5'-phospho-(deoxyribonucleotide)m = (deoxyribonucleotide)n+m + AMP + beta-nicotinamide D-nucleotide.. DNA ligase that catalyzes the formation of phosphodiester linkages between 5'-phosphoryl and 3'-hydroxyl groups in double-stranded DNA using NAD as a coenzyme and as the energy source for the reaction. It is essential for DNA replication and repair of damaged DNA. This chain is DNA ligase, found in Paraburkholderia phymatum (strain DSM 17167 / CIP 108236 / LMG 21445 / STM815) (Burkholderia phymatum).